Reading from the N-terminus, the 250-residue chain is Acidic endochitinase (250 aa).

Position 1 is a pyrrolidone carboxylic acid (Gln-1). The region spanning 1-36 (QNCQCDTTIYCCSQHGYCGNSYDYCGPGCQAGPCWD) is the Chitin-binding type-1 domain. 7 disulfide bridges follow: Cys-3-Cys-12, Cys-5-Cys-18, Cys-11-Cys-25, Cys-29-Cys-34, Cys-66-Cys-115, Cys-128-Cys-136, and Cys-218-Cys-250. The Proton donor role is filled by Glu-110.

The protein belongs to the glycosyl hydrolase 19 family. Chitinase class I subfamily.

The catalysed reaction is Random endo-hydrolysis of N-acetyl-beta-D-glucosaminide (1-&gt;4)-beta-linkages in chitin and chitodextrins.. In terms of biological role, defense against chitin-containing fungal pathogens. The sequence is that of Acidic endochitinase from Dioscorea japonica (Japanese yam).